Here is a 461-residue protein sequence, read N- to C-terminus: Bifunctional protein HldE (461 aa).

Positions 1 to 312 (MLEFLSQQKP…IKSFNRVDFE (312 aa)) are ribokinase. 191–194 (NKKE) provides a ligand contact to ATP. The active site involves Asp-259. The tract at residues 334–461 (FTNGCFDIVH…KIIEKIKDKK (128 aa)) is cytidylyltransferase.

The protein in the N-terminal section; belongs to the carbohydrate kinase PfkB family. In the C-terminal section; belongs to the cytidylyltransferase family. Homodimer.

The catalysed reaction is D-glycero-beta-D-manno-heptose 7-phosphate + ATP = D-glycero-beta-D-manno-heptose 1,7-bisphosphate + ADP + H(+). The enzyme catalyses D-glycero-beta-D-manno-heptose 1-phosphate + ATP + H(+) = ADP-D-glycero-beta-D-manno-heptose + diphosphate. Its pathway is nucleotide-sugar biosynthesis; ADP-L-glycero-beta-D-manno-heptose biosynthesis; ADP-L-glycero-beta-D-manno-heptose from D-glycero-beta-D-manno-heptose 7-phosphate: step 1/4. It participates in nucleotide-sugar biosynthesis; ADP-L-glycero-beta-D-manno-heptose biosynthesis; ADP-L-glycero-beta-D-manno-heptose from D-glycero-beta-D-manno-heptose 7-phosphate: step 3/4. Catalyzes the phosphorylation of D-glycero-D-manno-heptose 7-phosphate at the C-1 position to selectively form D-glycero-beta-D-manno-heptose-1,7-bisphosphate. Functionally, catalyzes the ADP transfer from ATP to D-glycero-beta-D-manno-heptose 1-phosphate, yielding ADP-D-glycero-beta-D-manno-heptose. The chain is Bifunctional protein HldE from Campylobacter jejuni subsp. doylei (strain ATCC BAA-1458 / RM4099 / 269.97).